The primary structure comprises 86 residues: Large ribosomal subunit protein bL27 (86 aa).

The span at 1–10 shows a compositional bias: gly residues; that stretch reads MAQKKGGGST. Residues 1 to 21 form a disordered region; sequence MAQKKGGGSTRNGRDSESKRL.

It belongs to the bacterial ribosomal protein bL27 family.

The chain is Large ribosomal subunit protein bL27 from Cupriavidus necator (strain ATCC 17699 / DSM 428 / KCTC 22496 / NCIMB 10442 / H16 / Stanier 337) (Ralstonia eutropha).